The primary structure comprises 667 residues: tRNA uridine 5-carboxymethylaminomethyl modification enzyme MnmG (667 aa).

Residue 13–18 coordinates FAD; that stretch reads GGGHAG. 280-294 is an NAD(+) binding site; that stretch reads GPRYCPSVEDKINRF.

It belongs to the MnmG family. In terms of assembly, homodimer. Heterotetramer of two MnmE and two MnmG subunits. The cofactor is FAD.

It localises to the cytoplasm. In terms of biological role, NAD-binding protein involved in the addition of a carboxymethylaminomethyl (cmnm) group at the wobble position (U34) of certain tRNAs, forming tRNA-cmnm(5)s(2)U34. The protein is tRNA uridine 5-carboxymethylaminomethyl modification enzyme MnmG of Polaromonas naphthalenivorans (strain CJ2).